The chain runs to 176 residues: Acireductone dioxygenase (176 aa).

A disordered region spans residues 1–21; it reads MKAYWYDNKPGDQREPHDSGR. The segment covering 9-20 has biased composition (basic and acidic residues); the sequence is KPGDQREPHDSG. The Fe(2+) site is built by histidine 81, histidine 83, glutamate 87, and histidine 126. Residues histidine 81, histidine 83, glutamate 87, and histidine 126 each contribute to the Ni(2+) site.

Belongs to the acireductone dioxygenase (ARD) family. Fe(2+) serves as cofactor. It depends on Ni(2+) as a cofactor.

It is found in the cytoplasm. The protein resides in the nucleus. The enzyme catalyses 1,2-dihydroxy-5-(methylsulfanyl)pent-1-en-3-one + O2 = 4-methylsulfanyl-2-oxobutanoate + formate + 2 H(+). It catalyses the reaction 1,2-dihydroxy-5-(methylsulfanyl)pent-1-en-3-one + O2 = 3-(methylsulfanyl)propanoate + CO + formate + 2 H(+). The protein operates within amino-acid biosynthesis; L-methionine biosynthesis via salvage pathway; L-methionine from S-methyl-5-thio-alpha-D-ribose 1-phosphate: step 5/6. Its function is as follows. Catalyzes 2 different reactions between oxygen and the acireductone 1,2-dihydroxy-3-keto-5-methylthiopentene (DHK-MTPene) depending upon the metal bound in the active site. Fe-containing acireductone dioxygenase (Fe-ARD) produces formate and 2-keto-4-methylthiobutyrate (KMTB), the alpha-ketoacid precursor of methionine in the methionine recycle pathway. Ni-containing acireductone dioxygenase (Ni-ARD) produces methylthiopropionate, carbon monoxide and formate, and does not lie on the methionine recycle pathway. This is Acireductone dioxygenase (adi1) from Aspergillus fumigatus (strain ATCC MYA-4609 / CBS 101355 / FGSC A1100 / Af293) (Neosartorya fumigata).